A 179-amino-acid polypeptide reads, in one-letter code: ATP-dependent protease subunit HslV (179 aa).

Thr8 is a catalytic residue. Positions 163, 166, and 169 each coordinate Na(+).

This sequence belongs to the peptidase T1B family. HslV subfamily. In terms of assembly, a double ring-shaped homohexamer of HslV is capped on each side by a ring-shaped HslU homohexamer. The assembly of the HslU/HslV complex is dependent on binding of ATP.

The protein localises to the cytoplasm. The catalysed reaction is ATP-dependent cleavage of peptide bonds with broad specificity.. With respect to regulation, allosterically activated by HslU binding. In terms of biological role, protease subunit of a proteasome-like degradation complex believed to be a general protein degrading machinery. This chain is ATP-dependent protease subunit HslV, found in Solibacter usitatus (strain Ellin6076).